We begin with the raw amino-acid sequence, 151 residues long: Transcriptional regulator MraZ (151 aa).

2 consecutive SpoVT-AbrB domains span residues 5 to 56 and 85 to 128; these read THRH…PLPT and SEEL…DAAR.

Belongs to the MraZ family. As to quaternary structure, forms oligomers.

It localises to the cytoplasm. The protein localises to the nucleoid. In Acidithiobacillus ferrooxidans (strain ATCC 23270 / DSM 14882 / CIP 104768 / NCIMB 8455) (Ferrobacillus ferrooxidans (strain ATCC 23270)), this protein is Transcriptional regulator MraZ.